A 466-amino-acid polypeptide reads, in one-letter code: Pyruvate kinase (466 aa).

A substrate-binding site is contributed by Arg-32. Asn-34, Ser-36, and Asp-66 together coordinate K(+). 34–37 (NTSH) lines the ATP pocket. ATP is bound at residue Arg-73. Glu-219 provides a ligand contact to Mg(2+). 3 residues coordinate substrate: Gly-242, Asp-243, and Thr-275. Residue Asp-243 participates in Mg(2+) binding.

The protein belongs to the pyruvate kinase family. In terms of assembly, homotetramer. A divalent metal cation is required as a cofactor.

The enzyme catalyses pyruvate + ATP = phosphoenolpyruvate + ADP + H(+). Its pathway is carbohydrate degradation; glycolysis; pyruvate from D-glyceraldehyde 3-phosphate: step 5/5. With respect to regulation, allosterically activated by AMP and inhibited by ATP. In Thermotoga maritima (strain ATCC 43589 / DSM 3109 / JCM 10099 / NBRC 100826 / MSB8), this protein is Pyruvate kinase (pyk).